Reading from the N-terminus, the 338-residue chain is Uroporphyrinogen decarboxylase (338 aa).

Substrate contacts are provided by residues 21–25, D71, Y146, S201, and H316; that span reads RQAGR.

The protein belongs to the uroporphyrinogen decarboxylase family. As to quaternary structure, homodimer.

It localises to the cytoplasm. The catalysed reaction is uroporphyrinogen III + 4 H(+) = coproporphyrinogen III + 4 CO2. It functions in the pathway porphyrin-containing compound metabolism; protoporphyrin-IX biosynthesis; coproporphyrinogen-III from 5-aminolevulinate: step 4/4. Catalyzes the decarboxylation of four acetate groups of uroporphyrinogen-III to yield coproporphyrinogen-III. The sequence is that of Uroporphyrinogen decarboxylase from Rickettsia akari (strain Hartford).